The primary structure comprises 255 residues: Ribosomal RNA small subunit methyltransferase A (255 aa).

6 residues coordinate S-adenosyl-L-methionine: Asn13, Leu15, Gly40, Glu61, Asp85, and Asn103.

This sequence belongs to the class I-like SAM-binding methyltransferase superfamily. rRNA adenine N(6)-methyltransferase family. RsmA subfamily.

Its subcellular location is the cytoplasm. The catalysed reaction is adenosine(1518)/adenosine(1519) in 16S rRNA + 4 S-adenosyl-L-methionine = N(6)-dimethyladenosine(1518)/N(6)-dimethyladenosine(1519) in 16S rRNA + 4 S-adenosyl-L-homocysteine + 4 H(+). Specifically dimethylates two adjacent adenosines (A1518 and A1519) in the loop of a conserved hairpin near the 3'-end of 16S rRNA in the 30S particle. May play a critical role in biogenesis of 30S subunits. This Dechloromonas aromatica (strain RCB) protein is Ribosomal RNA small subunit methyltransferase A.